The sequence spans 449 residues: Tubulin alpha-1 chain (449 aa).

GTP-binding residues include Gln11, Glu71, Ser140, Gly144, Thr145, Thr179, Asn206, and Asn228. Residue Glu71 participates in Mg(2+) binding. Residue Glu254 is part of the active site.

The protein belongs to the tubulin family. Dimer of alpha and beta chains. A typical microtubule is a hollow water-filled tube with an outer diameter of 25 nm and an inner diameter of 15 nM. Alpha-beta heterodimers associate head-to-tail to form protofilaments running lengthwise along the microtubule wall with the beta-tubulin subunit facing the microtubule plus end conferring a structural polarity. Microtubules usually have 13 protofilaments but different protofilament numbers can be found in some organisms and specialized cells. The cofactor is Mg(2+).

It localises to the cytoplasm. It is found in the cytoskeleton. It catalyses the reaction GTP + H2O = GDP + phosphate + H(+). Tubulin is the major constituent of microtubules, a cylinder consisting of laterally associated linear protofilaments composed of alpha- and beta-tubulin heterodimers. Microtubules grow by the addition of GTP-tubulin dimers to the microtubule end, where a stabilizing cap forms. Below the cap, tubulin dimers are in GDP-bound state, owing to GTPase activity of alpha-tubulin. In Emericella nidulans (strain FGSC A4 / ATCC 38163 / CBS 112.46 / NRRL 194 / M139) (Aspergillus nidulans), this protein is Tubulin alpha-1 chain (tubA).